Reading from the N-terminus, the 559-residue chain is Sulfite reductase [NADPH] hemoprotein beta-component (559 aa).

[4Fe-4S] cluster is bound by residues cysteine 423, cysteine 429, cysteine 468, and cysteine 472. Position 472 (cysteine 472) interacts with siroheme.

The protein belongs to the nitrite and sulfite reductase 4Fe-4S domain family. As to quaternary structure, alpha(8)-beta(8). The alpha component is a flavoprotein, the beta component is a hemoprotein. The cofactor is siroheme. Requires [4Fe-4S] cluster as cofactor.

It carries out the reaction hydrogen sulfide + 3 NADP(+) + 3 H2O = sulfite + 3 NADPH + 4 H(+). Its pathway is sulfur metabolism; hydrogen sulfide biosynthesis; hydrogen sulfide from sulfite (NADPH route): step 1/1. Its function is as follows. Component of the sulfite reductase complex that catalyzes the 6-electron reduction of sulfite to sulfide. This is one of several activities required for the biosynthesis of L-cysteine from sulfate. The sequence is that of Sulfite reductase [NADPH] hemoprotein beta-component from Thiocapsa roseopersicina.